An 868-amino-acid polypeptide reads, in one-letter code: Phospholipase D delta (868 aa).

One can recognise a C2 domain in the interval 1–154; that stretch reads MAEKVSEDVM…ASGERISGWF (154 aa). Aspartate 216 serves as a coordination point for Ca(2+). Residues 368 to 403 enclose the PLD phosphodiesterase 1 domain; sequence TLFTHHQKCVLVDTQAVGNNRKVTAFIGGLDLCDGR. Catalysis depends on residues histidine 373, lysine 375, and aspartate 380. Residue histidine 373 coordinates a 1,2-diacyl-sn-glycero-3-phosphate. Residues histidine 409 and histidine 440 each contribute to the Ca(2+) site. A 1,2-diacyl-sn-glycero-3-phosphate-binding residues include glutamine 588 and histidine 718. The 28-residue stretch at 713 to 740 folds into the PLD phosphodiesterase 2 domain; that stretch reads FMIYVHAKGMIVDDEYVLMGSANINQRS. Catalysis depends on residues histidine 718, lysine 720, and aspartate 725. Glutamate 781 is a Ca(2+) binding site.

Belongs to the phospholipase D family. C2-PLD subfamily. Interacts with GAPC1 and GAPC2. Increased interaction in the presence of H(2)O(2). Ca(2+) is required as a cofactor. In terms of tissue distribution, expressed in roots, leaves, stems, siliques and flowers. Strongly expressed in the vascular tissues of cotyledons and leaves under dehydration stress conditions. Expression is higher in old leaves than in young leaves. Expressed in leaves and guard cells. The isoform 2 may not be present in siliques.

It is found in the cell membrane. The catalysed reaction is a 1,2-diacyl-sn-glycero-3-phosphocholine + H2O = a 1,2-diacyl-sn-glycero-3-phosphate + choline + H(+). Its activity is regulated as follows. Activated by free oleic acid in a dose-dependent manner and less effectively by other unsaturated fatty acids such as linoleic and linolenic acids. Not activated by the saturated fatty acids stearic and palmitic acids. PIP2 and Ca(2+) stimulate activity by promoting lipid substrate binding to the active site. Activated by H(2)O(2) and by binding to GAPC. Functionally, hydrolyzes glycerol-phospholipids at the terminal phosphodiesteric bond to generate phosphatidic acids (PA). May be involved in PA accumulation in the dehydration stress response and in the transduction of hormonal and environmental signals to the microtubules cytoskeleton. Prefers phosphatidylethanolamine to phosphatidylcholine as substrate. Involved in H(2)O(2) and abscisic acid (ABA)-induced stomatal closure. Involved in nitric oxide (NO) signaling during stomatal closure. Plays a positive role in ABA-promoted senescence. Involved in basal defense and nonhost resistance. This chain is Phospholipase D delta, found in Arabidopsis thaliana (Mouse-ear cress).